A 99-amino-acid chain; its full sequence is MAMAKKSVSSFTLIFILVLVIFEVPEIKAQDSECLKEYGGDVGFPFCAPRIFPTICYTRCRENKGAKGGRCIWGEGTNVKCLCDYCNDSPFDQILRGGI.

Positions 1–30 (MAMAKKSVSSFTLIFILVLVIFEVPEIKAQ) are cleaved as a signal peptide. Disulfide bonds link Cys-34–Cys-86, Cys-47–Cys-71, Cys-56–Cys-81, and Cys-60–Cys-83. Positions 94–99 (ILRGGI) are excised as a propeptide.

Belongs to the DEFL family. Protease inhibitor I18 (RTI/MTI-2) subfamily.

The protein localises to the secreted. In terms of biological role, inhibits bovine beta-trypsin and alpha-chymotrypsin on a 1:1 molar basis. The sequence is that of Defensin-like protein 2 from Sinapis alba (White mustard).